Consider the following 86-residue polypeptide: MeuNaTxbeta-1 (86 aa).

An N-terminal signal peptide occupies residues 1 to 20 (MMKIIIFLIVSSLVLIGVKT). The LCN-type CS-alpha/beta domain occupies 21 to 83 (DNGYLLDKYT…LWHYETNKCN (63 aa)). 4 disulfides stabilise this stretch: Cys-32–Cys-82, Cys-36–Cys-57, Cys-43–Cys-64, and Cys-47–Cys-66.

In terms of tissue distribution, expressed by the venom gland.

Its subcellular location is the secreted. In terms of biological role, inhibits sodium channels (Nav). Also moderately inhibits human calcium-activated potassium channel KCa1.1/KCNMA1/BK (41.9% decrease at 2 uM toxin concentration). Shows moderate antimicrobial activity against both Gram-positive and -negative bacteria. The protein is MeuNaTxbeta-1 of Mesobuthus eupeus (Lesser Asian scorpion).